The chain runs to 538 residues: (R)-citramalate synthase (538 aa).

One can recognise a Pyruvate carboxyltransferase domain in the interval 3 to 268 (IKVYDTTLRD…IPKENLKKLF (266 aa)).

This sequence belongs to the alpha-IPM synthase/homocitrate synthase family.

It carries out the reaction pyruvate + acetyl-CoA + H2O = (3R)-citramalate + CoA + H(+). It participates in amino-acid biosynthesis; L-isoleucine biosynthesis; 2-oxobutanoate from pyruvate: step 1/3. Its function is as follows. Catalyzes the condensation of pyruvate and acetyl-coenzyme A to form (R)-citramalate. This Thermotoga maritima (strain ATCC 43589 / DSM 3109 / JCM 10099 / NBRC 100826 / MSB8) protein is (R)-citramalate synthase.